A 334-amino-acid polypeptide reads, in one-letter code: CRISPR-associated endonuclease Cas1 (334 aa).

Glu-161, His-226, and Glu-241 together coordinate Mn(2+).

Belongs to the CRISPR-associated endonuclease Cas1 family. As to quaternary structure, homodimer, forms a heterotetramer with a Cas2 homodimer. Mg(2+) serves as cofactor. Mn(2+) is required as a cofactor.

Its function is as follows. CRISPR (clustered regularly interspaced short palindromic repeat), is an adaptive immune system that provides protection against mobile genetic elements (viruses, transposable elements and conjugative plasmids). CRISPR clusters contain spacers, sequences complementary to antecedent mobile elements, and target invading nucleic acids. CRISPR clusters are transcribed and processed into CRISPR RNA (crRNA). Acts as a dsDNA endonuclease. Involved in the integration of spacer DNA into the CRISPR cassette. The polypeptide is CRISPR-associated endonuclease Cas1 (Methanothermobacter thermautotrophicus (strain ATCC 29096 / DSM 1053 / JCM 10044 / NBRC 100330 / Delta H) (Methanobacterium thermoautotrophicum)).